The sequence spans 767 residues: Transducin-like enhancer protein 2 (767 aa).

The tract at residues 1–152 is q domain; sequence MYPQGRHPTP…SLLGQQNQLQ (152 aa). Positions 153–215 are GP domain; that stretch reads PLSHAPPVPL…SRVDRAASRS (63 aa). The span at 198–212 shows a compositional bias: basic and acidic residues; that stretch reads RVGVDAEGSRVDRAA. Disordered stretches follow at residues 198-257, 264-283, and 296-346; these read RVGV…EEDK, VDEDQPSEPPSPVTTPCGKA, and SPAS…SSAS. Positions 216 to 279 are ccN domain; that stretch reads SSPSPPESLV…SEPPSPVTTP (64 aa). The Nuclear localization signal signature appears at 238–242; that stretch reads KQQRA. Ser-253 bears the Phosphoserine; by CK2 mark. Ser-274 is modified (phosphoserine; by CDK1). Thr-278 is subject to Phosphothreonine; by CDK1. The SP domain stretch occupies residues 280–447; the sequence is CGKAPLCIPA…VAKPAYSFHV (168 aa). Over residues 296-309 the composition is skewed to low complexity; it reads SPASLASSLGSPLP. At Ser-306 the chain carries Phosphoserine. Polar residues predominate over residues 323-346; sequence TPASRSCGTSPPQDSSTPGPSSAS. 6 WD repeats span residues 479 to 517, 525 to 564, 569 to 608, 611 to 650, 693 to 732, and 734 to 766; these read AHGEVVCAVTISSSTQHVYTGGKGCVKVWDVGQPGSKTP, NRDNYIRSCKLLPDGQSLIVGGEASTLSIWDLAAPTPRIK, SSAPACYALAVSPDAKVCFSCCSDGNIVVWDLQNQAMVRQ, GHTDGASCIDISDYGTRLWTGGLDNTVRCWDLREGRQLQQ, LHESCVLSLKFASCGRWFVSTGKDNLLNAWRTPYGASIFQ, and KESSSVLSCDISRNNKYIVTGSGDKKATVYEVV.

Belongs to the WD repeat Groucho/TLE family. As to quaternary structure, homooligomer and heterooligomer with other family members. Binds LEF1, TCF7, TCF7L1, TCF7L2, UTY, HES1 and HES5. Ubiquitinated by XIAP/BIRC4. Expressed in bone marrow-derived macrophages.

It is found in the nucleus. Transcriptional corepressor that binds to a number of transcription factors. Inhibits the transcriptional activation mediated by CTNNB1 and TCF family members in Wnt signaling. The effects of full-length TLE family members may be modulated by association with dominant-negative AES. The chain is Transducin-like enhancer protein 2 (Tle2) from Mus musculus (Mouse).